A 367-amino-acid polypeptide reads, in one-letter code: MKFDLLRTDGGARRGQLHLAHGVVQTPVFMPVGTYGTVKAMSPTEIADIGFEMLLSNTFHLWLRPGLEVIEAHGGLHRFMGWDKPILTDSGGFQVFSLGKLRKITEEGVKFASPTNGDKLFLTPETSMQIQRTLNSDIVMIFDECTPYPATERQAADSMRMSLRWAARSKAAHAGNPNALYGIVQGGMYEALRDESARELIGMDFDGYAIGGLSVGEPKDDMTRILAHTAPQLPADKPRYLMGVGTPSDLVAAVAAGIDQFDCVLPTRNARHGILFTRRGEIRIRNARWKLDTAPIDEECDCYACRHFTRAYVHHLIRAGEILGARLTTLHNLHYYHRLMAEVRAAIDAQRFSEFVARFHATQALGW.

Asp-89 (proton acceptor) is an active-site residue. Residues 89–93 (DSGGF), Asp-143, Gln-185, and Gly-212 each bind substrate. The interval 243–249 (GVGTPSD) is RNA binding. Asp-262 acts as the Nucleophile in catalysis. The tract at residues 267–271 (TRNAR) is RNA binding; important for wobble base 34 recognition. The Zn(2+) site is built by Cys-300, Cys-302, Cys-305, and His-331.

The protein belongs to the queuine tRNA-ribosyltransferase family. In terms of assembly, homodimer. Within each dimer, one monomer is responsible for RNA recognition and catalysis, while the other monomer binds to the replacement base PreQ1. Zn(2+) is required as a cofactor.

The enzyme catalyses 7-aminomethyl-7-carbaguanine + guanosine(34) in tRNA = 7-aminomethyl-7-carbaguanosine(34) in tRNA + guanine. It participates in tRNA modification; tRNA-queuosine biosynthesis. Its function is as follows. Catalyzes the base-exchange of a guanine (G) residue with the queuine precursor 7-aminomethyl-7-deazaguanine (PreQ1) at position 34 (anticodon wobble position) in tRNAs with GU(N) anticodons (tRNA-Asp, -Asn, -His and -Tyr). Catalysis occurs through a double-displacement mechanism. The nucleophile active site attacks the C1' of nucleotide 34 to detach the guanine base from the RNA, forming a covalent enzyme-RNA intermediate. The proton acceptor active site deprotonates the incoming PreQ1, allowing a nucleophilic attack on the C1' of the ribose to form the product. After dissociation, two additional enzymatic reactions on the tRNA convert PreQ1 to queuine (Q), resulting in the hypermodified nucleoside queuosine (7-(((4,5-cis-dihydroxy-2-cyclopenten-1-yl)amino)methyl)-7-deazaguanosine). The polypeptide is Queuine tRNA-ribosyltransferase (Thiobacillus denitrificans (strain ATCC 25259 / T1)).